The chain runs to 357 residues: Golgi to ER traffic protein 2 (357 aa).

The Cytoplasmic segment spans residues 1–224; the sequence is MSETTDKQLT…AKYHTYQEQL (224 aa). The segment covering 65-81 has biased composition (low complexity); sequence TDTATVTDSSTNATSVS. The interval 65-99 is disordered; sequence TDTATVTDSSTNATSVSPSAAKATPTSTGVSSAIS. The span at 88–98 shows a compositional bias: polar residues; that stretch reads TPTSTGVSSAI. Residues 225 to 245 traverse the membrane as a helical segment; the sequence is WQFRFLVVRILATIFNFAYHF. At 246–270 the chain is on the lumenal side; that stretch reads ITIPSFTASNHAYVRDLSEVYPLLG. A helical membrane pass occupies residues 271–290; it reads FMTIFTSIEVVIIATYYLLF. The Cytoplasmic segment spans residues 291–334; it reads TKLGLFHASNQKSFILKGISTLSMFVPQLLRYEPLVATFLGYKE. The helical transmembrane segment at 335–355 threads the bilayer; sequence LLGIFVGDLSLVVVMFGLLSF. Topologically, residues 356–357 are lumenal; it reads SN.

It belongs to the GET2 family. In terms of assembly, component of the Golgi to ER traffic (GET) complex, which is composed of GET1, GET2 and GET3. Within the complex, GET1 and GET2 form a heterotetramer which is stabilized by phosphatidylinositol binding and which binds to the GET3 homodimer.

The protein localises to the endoplasmic reticulum membrane. The protein resides in the golgi apparatus membrane. In terms of biological role, required for the post-translational delivery of tail-anchored (TA) proteins to the endoplasmic reticulum. Together with GET1, acts as a membrane receptor for soluble GET3, which recognizes and selectively binds the transmembrane domain of TA proteins in the cytosol. The GET complex cooperates with the HDEL receptor ERD2 to mediate the ATP-dependent retrieval of resident ER proteins that contain a C-terminal H-D-E-L retention signal from the Golgi to the ER. This is Golgi to ER traffic protein 2 from Lodderomyces elongisporus (strain ATCC 11503 / CBS 2605 / JCM 1781 / NBRC 1676 / NRRL YB-4239) (Yeast).